The chain runs to 429 residues: D-amino acid dehydrogenase (429 aa).

Valine 3–tyrosine 17 is a binding site for FAD.

The protein belongs to the DadA oxidoreductase family. It depends on FAD as a cofactor.

The enzyme catalyses a D-alpha-amino acid + A + H2O = a 2-oxocarboxylate + AH2 + NH4(+). Its pathway is amino-acid degradation; D-alanine degradation; NH(3) and pyruvate from D-alanine: step 1/1. Functionally, oxidative deamination of D-amino acids. The sequence is that of D-amino acid dehydrogenase from Paraburkholderia xenovorans (strain LB400).